Reading from the N-terminus, the 352-residue chain is Protein RecA (352 aa).

Gly67–Thr74 lines the ATP pocket.

Belongs to the RecA family.

Its subcellular location is the cytoplasm. In terms of biological role, can catalyze the hydrolysis of ATP in the presence of single-stranded DNA, the ATP-dependent uptake of single-stranded DNA by duplex DNA, and the ATP-dependent hybridization of homologous single-stranded DNAs. It interacts with LexA causing its activation and leading to its autocatalytic cleavage. In Chlamydia trachomatis serovar A (strain ATCC VR-571B / DSM 19440 / HAR-13), this protein is Protein RecA.